The primary structure comprises 509 residues: tRNA-2-methylthio-N(6)-dimethylallyladenosine synthase (509 aa).

The disordered stretch occupies residues 1–21 (MNEKQKLESGQVHPSDKKSEK). In terms of domain architecture, MTTase N-terminal spans 66–184 (RKFYIRTYGC…LPELLSEAYL (119 aa)). Residues Cys75, Cys111, Cys145, Cys221, Cys225, and Cys228 each coordinate [4Fe-4S] cluster. Positions 207-437 (RNGKIKGWVN…NALVNEISAK (231 aa)) constitute a Radical SAM core domain. Residues 440–503 (KEYEGKVVEV…TWSLDGEMVG (64 aa)) enclose the TRAM domain.

This sequence belongs to the methylthiotransferase family. MiaB subfamily. Monomer. Requires [4Fe-4S] cluster as cofactor.

Its subcellular location is the cytoplasm. The enzyme catalyses N(6)-dimethylallyladenosine(37) in tRNA + (sulfur carrier)-SH + AH2 + 2 S-adenosyl-L-methionine = 2-methylsulfanyl-N(6)-dimethylallyladenosine(37) in tRNA + (sulfur carrier)-H + 5'-deoxyadenosine + L-methionine + A + S-adenosyl-L-homocysteine + 2 H(+). It catalyses the reaction N(6)-dimethylallyladenosine(37) in tRNA + (sulfur carrier)-SH + AH2 + S-adenosyl-L-methionine = 2-thio-N(6)-dimethylallyladenosine(37) in tRNA + (sulfur carrier)-H + 5'-deoxyadenosine + L-methionine + A + H(+). The catalysed reaction is 2-thio-N(6)-dimethylallyladenosine(37) in tRNA + S-adenosyl-L-methionine = 2-methylsulfanyl-N(6)-dimethylallyladenosine(37) in tRNA + S-adenosyl-L-homocysteine + H(+). Its function is as follows. Catalyzes the methylthiolation of N6-(dimethylallyl)adenosine (i(6)A), leading to the formation of 2-methylthio-N6-(dimethylallyl)adenosine (ms(2)i(6)A) at position 37 in tRNAs that read codons beginning with uridine. In Bacillus subtilis (strain 168), this protein is tRNA-2-methylthio-N(6)-dimethylallyladenosine synthase.